Consider the following 329-residue polypeptide: 4-hydroxythreonine-4-phosphate dehydrogenase (329 aa).

Substrate is bound by residues H136 and T137. Residues H166, H211, and H266 each coordinate a divalent metal cation. Substrate-binding residues include K274, N283, and R292.

It belongs to the PdxA family. As to quaternary structure, homodimer. Requires Zn(2+) as cofactor. Mg(2+) is required as a cofactor. It depends on Co(2+) as a cofactor.

The protein resides in the cytoplasm. The enzyme catalyses 4-(phosphooxy)-L-threonine + NAD(+) = 3-amino-2-oxopropyl phosphate + CO2 + NADH. It functions in the pathway cofactor biosynthesis; pyridoxine 5'-phosphate biosynthesis; pyridoxine 5'-phosphate from D-erythrose 4-phosphate: step 4/5. Its function is as follows. Catalyzes the NAD(P)-dependent oxidation of 4-(phosphooxy)-L-threonine (HTP) into 2-amino-3-oxo-4-(phosphooxy)butyric acid which spontaneously decarboxylates to form 3-amino-2-oxopropyl phosphate (AHAP). The protein is 4-hydroxythreonine-4-phosphate dehydrogenase of Escherichia coli O139:H28 (strain E24377A / ETEC).